Here is a 168-residue protein sequence, read N- to C-terminus: 6,7-dimethyl-8-ribityllumazine synthase (168 aa).

Residues Phe24, Ala58–Glu60, and Ala82–Ile84 contribute to the 5-amino-6-(D-ribitylamino)uracil site. Glu87–Thr88 contributes to the (2S)-2-hydroxy-3-oxobutyl phosphate binding site. Residue His90 is the Proton donor of the active site. Asn115 contacts 5-amino-6-(D-ribitylamino)uracil. Residue Arg129 participates in (2S)-2-hydroxy-3-oxobutyl phosphate binding.

The protein belongs to the DMRL synthase family.

The catalysed reaction is (2S)-2-hydroxy-3-oxobutyl phosphate + 5-amino-6-(D-ribitylamino)uracil = 6,7-dimethyl-8-(1-D-ribityl)lumazine + phosphate + 2 H2O + H(+). It participates in cofactor biosynthesis; riboflavin biosynthesis; riboflavin from 2-hydroxy-3-oxobutyl phosphate and 5-amino-6-(D-ribitylamino)uracil: step 1/2. In terms of biological role, catalyzes the formation of 6,7-dimethyl-8-ribityllumazine by condensation of 5-amino-6-(D-ribitylamino)uracil with 3,4-dihydroxy-2-butanone 4-phosphate. This is the penultimate step in the biosynthesis of riboflavin. This is 6,7-dimethyl-8-ribityllumazine synthase from Paraburkholderia phytofirmans (strain DSM 17436 / LMG 22146 / PsJN) (Burkholderia phytofirmans).